Consider the following 341-residue polypeptide: L-threonine 3-dehydrogenase (341 aa).

Residue C38 coordinates Zn(2+). Catalysis depends on charge relay system residues T40 and H43. 6 residues coordinate Zn(2+): H63, E64, C93, C96, C99, and C107. NAD(+)-binding positions include I175, D195, R200, 262 to 264 (LGI), and 286 to 287 (IY).

This sequence belongs to the zinc-containing alcohol dehydrogenase family. Homotetramer. It depends on Zn(2+) as a cofactor.

The protein resides in the cytoplasm. The catalysed reaction is L-threonine + NAD(+) = (2S)-2-amino-3-oxobutanoate + NADH + H(+). Its pathway is amino-acid degradation; L-threonine degradation via oxydo-reductase pathway; glycine from L-threonine: step 1/2. Functionally, catalyzes the NAD(+)-dependent oxidation of L-threonine to 2-amino-3-ketobutyrate. The chain is L-threonine 3-dehydrogenase from Salmonella arizonae (strain ATCC BAA-731 / CDC346-86 / RSK2980).